The following is a 295-amino-acid chain: MDTIIEEYLKFIQLEKGLSSNTIGAYRRDLKKYNTFLELQKISHIDFIDRASIQQCLGYLHDNGASAKSLARFISTIRSFHQFALREKYAAKDPTVLIETPKYDRKLPDVLEINEVLALLETPNLAKINGYRDRTMLELLYATGMRVSELIQIELEDVNLIMGFVKVFGKGNKERIVPLGDTVIEYLKTYIETIRPQLLKKTVTNTLFLNMHGKPLSRQAIWKMIKQNAIKANITKSLTPHTLRHSFATHLLENGADLRAVQEMLGHSDISTTQLYTHVSKSQIRKMYNEFHPRA.

In terms of domain architecture, Core-binding (CB) spans 1 to 85 (MDTIIEEYLK…TIRSFHQFAL (85 aa)). Positions 106 to 289 (KLPDVLEINE…SKSQIRKMYN (184 aa)) constitute a Tyr recombinase domain. Catalysis depends on residues Arg146, Lys170, His241, Arg244, and His267. Tyr276 serves as the catalytic O-(3'-phospho-DNA)-tyrosine intermediate.

Belongs to the 'phage' integrase family. XerD subfamily. Forms a cyclic heterotetrameric complex composed of two molecules of XerC and two molecules of XerD.

It is found in the cytoplasm. Site-specific tyrosine recombinase, which acts by catalyzing the cutting and rejoining of the recombining DNA molecules. The XerC-XerD complex is essential to convert dimers of the bacterial chromosome into monomers to permit their segregation at cell division. It also contributes to the segregational stability of plasmids. This is Tyrosine recombinase XerD from Staphylococcus saprophyticus subsp. saprophyticus (strain ATCC 15305 / DSM 20229 / NCIMB 8711 / NCTC 7292 / S-41).